The sequence spans 636 residues: Threonine--tRNA ligase (636 aa).

Residues 1–61 (MPVITLPDGS…TQDASLQLIT (61 aa)) form the TGS domain. Residues 243-534 (DHRKIGKTLD…LIEEFTGKFP (292 aa)) are catalytic. Zn(2+) is bound by residues cysteine 334, histidine 385, and histidine 511.

The protein belongs to the class-II aminoacyl-tRNA synthetase family. In terms of assembly, homodimer. Requires Zn(2+) as cofactor.

The protein resides in the cytoplasm. It carries out the reaction tRNA(Thr) + L-threonine + ATP = L-threonyl-tRNA(Thr) + AMP + diphosphate + H(+). Functionally, catalyzes the attachment of threonine to tRNA(Thr) in a two-step reaction: L-threonine is first activated by ATP to form Thr-AMP and then transferred to the acceptor end of tRNA(Thr). Also edits incorrectly charged L-seryl-tRNA(Thr). This is Threonine--tRNA ligase from Colwellia psychrerythraea (strain 34H / ATCC BAA-681) (Vibrio psychroerythus).